The primary structure comprises 24 residues: SLGGKPDLRPCYPPCHYIPRPKPR.

An intrachain disulfide couples Cys-11 to Cys-15.

This sequence belongs to the waglerin family. Monomer. In terms of tissue distribution, expressed by the venom gland.

The protein localises to the secreted. In terms of biological role, waglerin-2 selectively blocks the epsilon subunit of muscle nicotinic acetylcholine receptor (nAChR). Also has effects on rodent ionotropic GABA(A) receptors (GABR), since it potentiates I(GABA) in some neurons and depresses I(GABA) in others. In mice, it elicits tachypnea, ocular proptosis, rapid collapse and spasms, whereas no toxic effects on respiration and blood pressure are observed in rats. Functionally, waglerin-4 selectively blocks the epsilon subunit of muscle nicotinic acetylcholine receptor. It elicits tachypnea, ocular proptosis, rapid collapse and spasms in mice. It causes death by respiratory failure. The protein is Waglerin-4 of Tropidolaemus wagleri (Wagler's pit viper).